Consider the following 374-residue polypeptide: PqqA peptide cyclase (374 aa).

Positions 13 to 230 constitute a Radical SAM core domain; that stretch reads VPAPIAMLAE…EAEARLRGTL (218 aa). Residues Cys27, Cys31, and Cys34 each contribute to the [4Fe-4S] cluster site.

This sequence belongs to the radical SAM superfamily. PqqE family. Interacts with PqqD. The interaction is necessary for activity of PqqE. [4Fe-4S] cluster serves as cofactor.

It catalyses the reaction [PQQ precursor protein] + S-adenosyl-L-methionine = E-Y cross-linked-[PQQ precursor protein] + 5'-deoxyadenosine + L-methionine + H(+). Its pathway is cofactor biosynthesis; pyrroloquinoline quinone biosynthesis. Functionally, catalyzes the cross-linking of a glutamate residue and a tyrosine residue in the PqqA protein as part of the biosynthesis of pyrroloquinoline quinone (PQQ). The protein is PqqA peptide cyclase of Ruegeria pomeroyi (strain ATCC 700808 / DSM 15171 / DSS-3) (Silicibacter pomeroyi).